Here is a 139-residue protein sequence, read N- to C-terminus: Non-structural protein 1 (139 aa).

Residues 136–139 (DLNP) carry the DLNP; interaction with MAP1B motif.

This sequence belongs to the pneumovirus non-structural protein 1 family. In terms of assembly, monomer. Homomultimer. Heteromultimer with NS2. Interacts with the matrix protein M. Interacts with host ELOC and CUL2; this interaction allows NS1 to form an active E3 ligase with ELOC and CUL2. Interacts with host IRF3; this interaction leads to the disrupted association of IRF3 with CREBBP and thus reduced binding of IRF3 to the IFN-beta promoter. Interacts with host MAVS; this interaction prevents MAVS binding to RIGI and inhibits signaling pathway leading to interferon production. Interacts with host MAP1B/microtubule-associated protein 1B. Interacts with host TRIM25 (via SPRY domain); this interaction suppresses RIGI ubiquitination and results in decreased interaction between RIGI and MAVS.

Its subcellular location is the host cytoplasm. The protein localises to the host mitochondrion. It is found in the host nucleus. Functionally, plays a major role in antagonizing the type I IFN-mediated antiviral response by degrading or inhibiting multiple cellular factors required for either IFN induction or response pathways. Acts cooperatively with NS2 to repress activation and nuclear translocation of host IFN-regulatory factor IRF3. Also disrupts the association of IRF3 with CREBBP. Interacts with host mitochondrial-associated membrane (MAM) MAVS and prevents the interaction with RIGI. Interacts with TRIM25 to suppress TRIM25-mediated RIGI ubiquitination and thereby RIGI-MAVS interaction. Together with NS2, participates in the proteasomal degradation of host STAT2, IRF3, IRF7, TBK1 and RIGI through a NS-degradasome involving CUL2 and Elongin-C. The degradasome requires an intact mitochondrial MAVS. Decreases the levels of host TRAF3 and IKBKE/IKK-epsilon. As functions other than disruptions of the type I IFN-mediated antiviral signaling pathways, induces host SOCS1 and SOCS3 expression. Suppresses premature apoptosis by an NF-kappa-B-dependent, interferon-independent mechanism and thus facilitates virus growth. Additionally, NS1 may serve some inhibitory role in viral transcription and RNA replication. Suppresses proliferation and activation of host CD103+ CD8+ cytotoxic T-lymphocytes and Th17 helper T-lymphocytes. The polypeptide is Non-structural protein 1 (1C) (Homo sapiens (Human)).